We begin with the raw amino-acid sequence, 58 residues long: Large ribosomal subunit protein uL30 (58 aa).

It belongs to the universal ribosomal protein uL30 family. Part of the 50S ribosomal subunit.

This Vibrio campbellii (strain ATCC BAA-1116) protein is Large ribosomal subunit protein uL30.